The sequence spans 513 residues: Putative thymidine phosphorylase (513 aa).

This sequence belongs to the thymidine/pyrimidine-nucleoside phosphorylase family. Type 2 subfamily.

The enzyme catalyses thymidine + phosphate = 2-deoxy-alpha-D-ribose 1-phosphate + thymine. This Rhodopseudomonas palustris (strain BisA53) protein is Putative thymidine phosphorylase.